We begin with the raw amino-acid sequence, 84 residues long: Large ribosomal subunit protein bL27 (84 aa).

Residues 1-25 (MSHKKAGGSTRNGRDSNAQRRGVKK) are disordered.

It belongs to the bacterial ribosomal protein bL27 family.

The chain is Large ribosomal subunit protein bL27 from Desulforapulum autotrophicum (strain ATCC 43914 / DSM 3382 / VKM B-1955 / HRM2) (Desulfobacterium autotrophicum).